Reading from the N-terminus, the 759-residue chain is MKRALFVAEKNDVAKGVAAILSNGTANRREGRSKFNKIYTLNTELFGQQTAISVTSVSGHMMNFQFHENMSNWQTASMVELFRAPVRHVVTPEMKLIEQTLREQAQRHDILVVWTDCDREGEAIGAEIVKVCRDSNRRLDIFRARFSEITKAAITRAARNLIRLDEKTVAAVDCRSELDLRIGSAFTRLQTLHLRNRFRDLLGQNDTSQVISYGSCQFPTLGFVTDRYKMIENFVSEPFWKLIVEHTRESHKVEFLWDRNRLFDRDTVDILHDECKETKEAHVEKVAKKPKSKWRPQALDTVELEKLGISKLRMSAKQTMQVAEKLYSKGFISYPRTETNKFPAGLNLTPLVQQQTQSNIWGDFANEVLQNGVNPRNGRKSDEAHPPIHPLKFTEKHQLQGDDWKVYELVVRHFLACVSQDAQGEETMVNLTVGTEKFHASGLRIRDMGYLKVYVYEKWGNRLLPTYTEGERFTDFELKIGDGKTQAPDFLTEADLISLMDKYGIGTDATHAEHIEKIKTREYIGVRPDGKLIPSFLGLALVDGYDDMGFAMSKPDLRANLEIGLKEICDGRRQKQEVLDEQIGKYRAIFVESERKIGVLSQSLQRYLDKNNQAGGGPGGPGGGGGPPRGPGGGGGGGPTGPPAPPKPPAKPRGRPPRKSISPAVKNGHDDPENDTIVTLSEVFGSMSNPKPARKPRAPRKSAAPKEQEEEEEVFCQCPEPMRAVTKVVQKEGPNKGKKFYTCSLPYTSSEKCNFFKWA.

Residues 3 to 147 (RALFVAEKND…RLDIFRARFS (145 aa)) enclose the Toprim domain. The 426-residue stretch at 165–590 (DEKTVAAVDC…EQIGKYRAIF (426 aa)) folds into the Topo IA-type catalytic domain. The O-(5'-phospho-DNA)-tyrosine intermediate role is filled by tyrosine 334. The disordered stretch occupies residues 609–715 (DKNNQAGGGP…KEQEEEEEVF (107 aa)). A compositionally biased stretch (gly residues) spans 614–639 (AGGGPGGPGGGGGPPRGPGGGGGGGP). Residues 640 to 649 (TGPPAPPKPP) are compositionally biased toward pro residues. Residues cysteine 716, cysteine 718, cysteine 743, and cysteine 753 each contribute to the Zn(2+) site. Residues 716–759 (CQCPEPMRAVTKVVQKEGPNKGKKFYTCSLPYTSSEKCNFFKWA) form a GRF-type zinc finger.

The protein belongs to the type IA topoisomerase family. In terms of assembly, component of the BTR double Holliday Junction dissolution complex composed of at least him-6, top-3, rmh-1 and rmif-2, which is involved in double strand break repair in the germline. May interact with rmh-1.

It localises to the nucleus. The enzyme catalyses ATP-independent breakage of single-stranded DNA, followed by passage and rejoining.. Component of the BTR double Holliday Junction dissolution complex, which is involved in homologous recombination during meiotic double strand break in the germline. Releases the supercoiling and torsional tension of DNA introduced during the DNA replication and transcription by transiently cleaving and rejoining one strand of the DNA duplex. Introduces a single-strand break via transesterification at a target site in duplex DNA. The scissile phosphodiester is attacked by the catalytic tyrosine of the enzyme, resulting in the formation of a DNA-(5'-phosphotyrosyl)-enzyme intermediate and the expulsion of a 3'-OH DNA strand. The free DNA strand than undergoes passage around the unbroken strand thus removing DNA supercoils. Finally, in the religation step, the DNA 3'-OH attacks the covalent intermediate to expel the active-site tyrosine and restore the DNA phosphodiester backbone. The polypeptide is DNA topoisomerase 3 (Caenorhabditis elegans).